A 693-amino-acid chain; its full sequence is Elongation factor G (693 aa).

The tr-type G domain occupies 8–282; that stretch reads EKTRNIGIMA…AVIDYLPSPL (275 aa). Residues 17–24, 81–85, and 135–138 each bind GTP; these read AHIDAGKT, DTPGH, and NKMD.

The protein belongs to the TRAFAC class translation factor GTPase superfamily. Classic translation factor GTPase family. EF-G/EF-2 subfamily.

The protein resides in the cytoplasm. In terms of biological role, catalyzes the GTP-dependent ribosomal translocation step during translation elongation. During this step, the ribosome changes from the pre-translocational (PRE) to the post-translocational (POST) state as the newly formed A-site-bound peptidyl-tRNA and P-site-bound deacylated tRNA move to the P and E sites, respectively. Catalyzes the coordinated movement of the two tRNA molecules, the mRNA and conformational changes in the ribosome. This chain is Elongation factor G, found in Staphylococcus aureus (strain Newman).